The following is a 632-amino-acid chain: Cytoplasmic polyadenylation element-binding protein 3 (632 aa).

A compositionally biased stretch (basic and acidic residues) spans methionine 1–lysine 11. Disordered regions lie at residues methionine 1–serine 89 and phenylalanine 127–valine 212. The span at glutamine 13 to proline 48 shows a compositional bias: low complexity. Polar residues-rich tracts occupy residues serine 65 to serine 89 and histidine 135 to lysine 169. Positions proline 170–asparagine 193 are enriched in low complexity. RRM domains lie at arginine 375–leucine 466 and lysine 483–leucine 565.

The protein belongs to the RRM CPEB family. As to quaternary structure, following synaptic activity, forms amyloid-like oligomers. Aggregation requires an intact actin cytoskeleton. As to expression, in embryos, expressed in the central nervous system, and intermediate and distal pronephric tubule segments of the embryonic kidney.

It is found in the cytoplasm. The protein localises to the nucleus. Its subcellular location is the synapse. The protein resides in the cell projection. It localises to the dendrite. It is found in the postsynaptic density. Sequence-specific RNA-binding protein which acts as a translational repressor in the basal unstimulated state but, following neuronal stimulation, acts as a translational activator. Does not bind to the cytoplasmic polyadenylation element (CPE), a uridine-rich sequence element within the mRNA 3'-UTR, but binds to a U-rich loop within a stem-loop structure. Required for the consolidation and maintenance of hippocampal-based long term memory. Inhibits differentiation of intermediate mesoderm from an early stage to inhibit pronephric differentiation but induce neural differentiation. In Xenopus tropicalis (Western clawed frog), this protein is Cytoplasmic polyadenylation element-binding protein 3 (cpeb3).